The sequence spans 239 residues: Purine nucleoside phosphorylase DeoD-type (239 aa).

His-5 contacts a purine D-ribonucleoside. Phosphate-binding positions include Gly-21, Arg-25, Arg-44, and 88–91 (RVGS). Residues 180–182 (EME) and 204–205 (SD) contribute to the a purine D-ribonucleoside site. The Proton donor role is filled by Asp-205.

It belongs to the PNP/UDP phosphorylase family. Homohexamer; trimer of homodimers.

It catalyses the reaction a purine D-ribonucleoside + phosphate = a purine nucleobase + alpha-D-ribose 1-phosphate. The enzyme catalyses a purine 2'-deoxy-D-ribonucleoside + phosphate = a purine nucleobase + 2-deoxy-alpha-D-ribose 1-phosphate. Catalyzes the reversible phosphorolytic breakdown of the N-glycosidic bond in the beta-(deoxy)ribonucleoside molecules, with the formation of the corresponding free purine bases and pentose-1-phosphate. The protein is Purine nucleoside phosphorylase DeoD-type of Salmonella heidelberg (strain SL476).